The primary structure comprises 387 residues: Peptostreptococcal albumin-binding protein (387 aa).

Positions 1 to 26 are cleaved as a signal peptide; the sequence is MKLNKKLLMAALAGAIVVGGGVNTFA. The segment at 122-155 is disordered; it reads LFDKHELGGLGKDKGPGRFDENGWENNEHGYETR. The segment at 213 to 265 is GA module; that stretch reads TIDQWLLKNAKEDAIAELKKAGITSDFYFNAINKAKTVEEVNALKNEILKAHA. The disordered stretch occupies residues 266–360; the sequence is GKEVNPSTPE…EKAALPEAGR (95 aa). Over residues 270–282 the composition is skewed to polar residues; that stretch reads NPSTPEVTPSVPQ. The span at 298–360 shows a compositional bias: basic and acidic residues; it reads GTKEDGKKEN…EKAALPEAGR (63 aa). Residues 355–359 carry the LPXTG sorting signal motif; it reads LPEAG. Pentaglycyl murein peptidoglycan amidated alanine is present on A358. The propeptide at 359-387 is removed by sortase; sequence GRRKAEILTLAAASLSSVAGAFISLKKRK.

It is found in the secreted. Its subcellular location is the cell wall. Functionally, binds serum albumin. The protein is Peptostreptococcal albumin-binding protein (pab) of Finegoldia magna (Peptostreptococcus magnus).